We begin with the raw amino-acid sequence, 374 residues long: Phosphatidylglycerol--prolipoprotein diacylglyceryl transferase (374 aa).

Transmembrane regions (helical) follow at residues 33–53 (ICFI…IALF), 155–175 (LCWF…VFFY), 195–215 (LASH…TSYI), and 222–242 (LSFL…AVFI). An a 1,2-diacyl-sn-glycero-3-phospho-(1'-sn-glycerol)-binding site is contributed by Arg-243. The next 3 helical transmembrane spans lie at 279-299 (PVQL…FTLW), 306-326 (LAAG…RFLL), and 341-361 (ILQM…CLVW).

This sequence belongs to the Lgt family.

It is found in the cell inner membrane. The catalysed reaction is L-cysteinyl-[prolipoprotein] + a 1,2-diacyl-sn-glycero-3-phospho-(1'-sn-glycerol) = an S-1,2-diacyl-sn-glyceryl-L-cysteinyl-[prolipoprotein] + sn-glycerol 1-phosphate + H(+). It participates in protein modification; lipoprotein biosynthesis (diacylglyceryl transfer). Catalyzes the transfer of the diacylglyceryl group from phosphatidylglycerol to the sulfhydryl group of the N-terminal cysteine of a prolipoprotein, the first step in the formation of mature lipoproteins. The polypeptide is Phosphatidylglycerol--prolipoprotein diacylglyceryl transferase (Protochlamydia amoebophila (strain UWE25)).